The following is a 258-amino-acid chain: 2S seed storage albumin protein (258 aa).

The N-terminal stretch at 1 to 24 (MAKLIPTIALVSVLLFIIANASFA) is a signal peptide. A propeptide spanning residues 25 to 35 (YRTTITTIEID) is cleaved from the precursor. Disulfide bonds link Cys-49/Cys-108, Cys-61/Cys-97, Cys-98/Cys-145, and Cys-110/Cys-149. The interval 64 to 87 (YLRQSSSRRSPGEEVLRMPGDENQ) is disordered. Ser-69 is modified (phosphoserine). The segment covering 73-83 (SPGEEVLRMPG) has biased composition (basic and acidic residues). A propeptide spanning residues 77 to 86 (EVLRMPGDEN) is cleaved from the precursor. At Gln-87 the chain carries Pyrrolidone carboxylic acid. 2 consecutive propeptides follow at residues 154–156 (RTN) and 191–193 (SDN). Disulfide bonds link Cys-162/Cys-212, Cys-175/Cys-201, Cys-202/Cys-249, and Cys-214/Cys-256. Gln-194 carries the pyrrolidone carboxylic acid modification.

It belongs to the 2S seed storage albumins family. In terms of assembly, the 2 mature proteins consist of heterodimers of a small and a large chain; disulfide-linked. Post-translationally, the N-terminus of both large chains is blocked. In terms of processing, the C-terminus of the allergen Ric c 1 and allergen Ric c 3 small chains are heterogeneous and the length of the chains can vary from 33 to 36 amino acids and from 36 to 40 amino acids respectively.

Functionally, 2S seed storage proteins. In Ricinus communis (Castor bean), this protein is 2S seed storage albumin protein.